The following is a 131-amino-acid chain: uncharacterized protein (131 aa).

A run of 3 helical transmembrane segments spans residues 13-35 (RFIK…TFPI), 60-79 (LVAL…TYVC), and 100-119 (LFEI…WNIT).

It is found in the membrane. This is an uncharacterized protein from Saccharomyces cerevisiae (strain ATCC 204508 / S288c) (Baker's yeast).